The following is a 316-amino-acid chain: Pantothenate kinase (316 aa).

95–102 (GSVAVGKS) contacts ATP.

This sequence belongs to the prokaryotic pantothenate kinase family.

It localises to the cytoplasm. It carries out the reaction (R)-pantothenate + ATP = (R)-4'-phosphopantothenate + ADP + H(+). It functions in the pathway cofactor biosynthesis; coenzyme A biosynthesis; CoA from (R)-pantothenate: step 1/5. This Shewanella halifaxensis (strain HAW-EB4) protein is Pantothenate kinase.